We begin with the raw amino-acid sequence, 118 residues long: Large ribosomal subunit protein uL18 (118 aa).

It belongs to the universal ribosomal protein uL18 family. As to quaternary structure, part of the 50S ribosomal subunit; part of the 5S rRNA/L5/L18/L25 subcomplex. Contacts the 5S and 23S rRNAs.

Its function is as follows. This is one of the proteins that bind and probably mediate the attachment of the 5S RNA into the large ribosomal subunit, where it forms part of the central protuberance. The polypeptide is Large ribosomal subunit protein uL18 (Dechloromonas aromatica (strain RCB)).